We begin with the raw amino-acid sequence, 146 residues long: Anti-sigma F factor (146 aa).

It belongs to the anti-sigma-factor family.

The catalysed reaction is L-seryl-[protein] + ATP = O-phospho-L-seryl-[protein] + ADP + H(+). It catalyses the reaction L-threonyl-[protein] + ATP = O-phospho-L-threonyl-[protein] + ADP + H(+). Its function is as follows. Binds to sigma F and blocks its ability to form an RNA polymerase holoenzyme (E-sigma F). Phosphorylates SpoIIAA on a serine residue. This phosphorylation may enable SpoIIAA to act as an anti-anti-sigma factor that counteracts SpoIIAB and thus releases sigma F from inhibition. This Shouchella clausii (strain KSM-K16) (Alkalihalobacillus clausii) protein is Anti-sigma F factor.